The following is a 297-amino-acid chain: Ribosomal RNA small subunit methyltransferase H (297 aa).

S-adenosyl-L-methionine contacts are provided by residues glycine 30 to tyrosine 32, aspartate 48, phenylalanine 75, aspartate 96, and glutamine 103.

It belongs to the methyltransferase superfamily. RsmH family.

The protein localises to the cytoplasm. It catalyses the reaction cytidine(1402) in 16S rRNA + S-adenosyl-L-methionine = N(4)-methylcytidine(1402) in 16S rRNA + S-adenosyl-L-homocysteine + H(+). Functionally, specifically methylates the N4 position of cytidine in position 1402 (C1402) of 16S rRNA. The chain is Ribosomal RNA small subunit methyltransferase H from Ehrlichia chaffeensis (strain ATCC CRL-10679 / Arkansas).